The following is a 358-amino-acid chain: tRNA (guanine-N(7)-)-methyltransferase (358 aa).

The disordered stretch occupies residues 1-29 (MTPPPPKRQKRDEYRKATAEATSQSGASD). S-adenosyl-L-methionine-binding positions include G99 and 122–123 (EI). Residues 151–186 (TATAASETPSQQQAQIDGKQANANAAADAASPAPST) show a composition bias toward low complexity. The disordered stretch occupies residues 151-194 (TATAASETPSQQQAQIDGKQANANAAADAASPAPSTDTEHMPTT). Residues 209–210 (NT) and C229 contribute to the S-adenosyl-L-methionine site. Residue D232 is part of the active site. 330 to 332 (TEE) contacts S-adenosyl-L-methionine.

Belongs to the class I-like SAM-binding methyltransferase superfamily. TrmB family. As to quaternary structure, forms a complex with trm82.

The protein resides in the nucleus. The catalysed reaction is guanosine(46) in tRNA + S-adenosyl-L-methionine = N(7)-methylguanosine(46) in tRNA + S-adenosyl-L-homocysteine. It participates in tRNA modification; N(7)-methylguanine-tRNA biosynthesis. Its function is as follows. Catalyzes the formation of N(7)-methylguanine at position 46 (m7G46) in tRNA. The sequence is that of tRNA (guanine-N(7)-)-methyltransferase (trm8) from Aspergillus fumigatus (strain ATCC MYA-4609 / CBS 101355 / FGSC A1100 / Af293) (Neosartorya fumigata).